Here is a 143-residue protein sequence, read N- to C-terminus: uncharacterized protein (143 aa).

A signal peptide spans 1–32 (MITNLRRRTAMAAAGLGAALGLGILLVPTVDA).

This sequence to M.tuberculosis Rv1269c.

This is an uncharacterized protein from Mycobacterium tuberculosis (strain CDC 1551 / Oshkosh).